We begin with the raw amino-acid sequence, 272 residues long: Glutamate racemase (272 aa).

Substrate-binding positions include 16–17 (DS) and 48–49 (YG). Cys-79 acts as the Proton donor/acceptor in catalysis. 80–81 (NT) provides a ligand contact to substrate. Residue Cys-191 is the Proton donor/acceptor of the active site. 192–193 (TH) contributes to the substrate binding site.

It belongs to the aspartate/glutamate racemases family.

The catalysed reaction is L-glutamate = D-glutamate. Its pathway is cell wall biogenesis; peptidoglycan biosynthesis. Its function is as follows. Provides the (R)-glutamate required for cell wall biosynthesis. This Chlorobium phaeobacteroides (strain DSM 266 / SMG 266 / 2430) protein is Glutamate racemase.